A 303-amino-acid polypeptide reads, in one-letter code: Pseudouridine-5'-phosphate glycosidase (303 aa).

Residue Glu23 is the Proton donor of the active site. The substrate site is built by Lys85 and Val105. Asp137 provides a ligand contact to Mn(2+). 139 to 141 (SQD) is a binding site for substrate. Lys158 (nucleophile) is an active-site residue.

It belongs to the pseudouridine-5'-phosphate glycosidase family. In terms of assembly, homotrimer. Mn(2+) is required as a cofactor.

It carries out the reaction D-ribose 5-phosphate + uracil = psi-UMP + H2O. Its function is as follows. Catalyzes the reversible cleavage of pseudouridine 5'-phosphate (PsiMP) to ribose 5-phosphate and uracil. Functions biologically in the cleavage direction, as part of a pseudouridine degradation pathway. This chain is Pseudouridine-5'-phosphate glycosidase, found in Myxococcus xanthus (strain DK1622).